Consider the following 276-residue polypeptide: Hydroxyethylthiazole kinase (276 aa).

The ATP site is built by Arg-126 and Ser-172. Position 199 (Gly-199) interacts with substrate.

Belongs to the Thz kinase family. It depends on Mg(2+) as a cofactor.

The enzyme catalyses 5-(2-hydroxyethyl)-4-methylthiazole + ATP = 4-methyl-5-(2-phosphooxyethyl)-thiazole + ADP + H(+). The protein operates within cofactor biosynthesis; thiamine diphosphate biosynthesis; 4-methyl-5-(2-phosphoethyl)-thiazole from 5-(2-hydroxyethyl)-4-methylthiazole: step 1/1. Catalyzes the phosphorylation of the hydroxyl group of 4-methyl-5-beta-hydroxyethylthiazole (THZ). The sequence is that of Hydroxyethylthiazole kinase from Burkholderia pseudomallei (strain 1710b).